Reading from the N-terminus, the 388-residue chain is Chorismate synthase (388 aa).

NADP(+) contacts are provided by Arg-39 and Arg-45. Residues 132–134, 251–252, Gly-296, 311–315, and Arg-337 each bind FMN; these read RSS, NA, and KPIPT.

The protein belongs to the chorismate synthase family. In terms of assembly, homotetramer. The cofactor is FMNH2.

The enzyme catalyses 5-O-(1-carboxyvinyl)-3-phosphoshikimate = chorismate + phosphate. Its pathway is metabolic intermediate biosynthesis; chorismate biosynthesis; chorismate from D-erythrose 4-phosphate and phosphoenolpyruvate: step 7/7. Catalyzes the anti-1,4-elimination of the C-3 phosphate and the C-6 proR hydrogen from 5-enolpyruvylshikimate-3-phosphate (EPSP) to yield chorismate, which is the branch point compound that serves as the starting substrate for the three terminal pathways of aromatic amino acid biosynthesis. This reaction introduces a second double bond into the aromatic ring system. In Staphylococcus epidermidis (strain ATCC 35984 / DSM 28319 / BCRC 17069 / CCUG 31568 / BM 3577 / RP62A), this protein is Chorismate synthase.